A 61-amino-acid chain; its full sequence is Large ribosomal subunit protein eL20 (61 aa).

Belongs to the eukaryotic ribosomal protein eL20 family. As to quaternary structure, part of the 50S ribosomal subunit. Binds 23S rRNA.

This Methanosarcina acetivorans (strain ATCC 35395 / DSM 2834 / JCM 12185 / C2A) protein is Large ribosomal subunit protein eL20.